The following is a 95-amino-acid chain: UPF0473 protein BPUM_2377 (95 aa).

The protein belongs to the UPF0473 family.

In Bacillus pumilus (strain SAFR-032), this protein is UPF0473 protein BPUM_2377.